We begin with the raw amino-acid sequence, 198 residues long: Molybdopterin synthase catalytic subunit (198 aa).

Substrate is bound by residues 107–108 (HR), Lys-123, and 130–132 (KKE).

This sequence belongs to the MoaE family. MOCS2B subfamily. In terms of assembly, heterotetramer; composed of 2 small (MOCS2A) and 2 large (MOCS2B) subunits.

It is found in the cytoplasm. It catalyses the reaction 2 [molybdopterin-synthase sulfur-carrier protein]-C-terminal-Gly-aminoethanethioate + cyclic pyranopterin phosphate + H2O = molybdopterin + 2 [molybdopterin-synthase sulfur-carrier protein]-C-terminal Gly-Gly + 2 H(+). It participates in cofactor biosynthesis; molybdopterin biosynthesis. Functionally, catalytic subunit of the molybdopterin synthase complex, a complex that catalyzes the conversion of precursor Z into molybdopterin. Acts by mediating the incorporation of 2 sulfur atoms from thiocarboxylated MOCS2A into precursor Z to generate a dithiolene group. The chain is Molybdopterin synthase catalytic subunit from Arabidopsis thaliana (Mouse-ear cress).